Consider the following 822-residue polypeptide: ATP-dependent zinc metalloprotease FTSH 8, mitochondrial (822 aa).

Over residues 1–25 (MSLASLARALSRRSAPSSSRARQGF) the composition is skewed to low complexity. Disordered stretches follow at residues 1–50 (MSLA…LHGG), 103–131 (NYYPKGKKEAPKGDGSNKSDSKQDSSTDD), and 202–221 (SSPQSNSQGQNTDAIITTND). A mitochondrion-targeting transit peptide spans 1 to 93 (MSLASLARAL…LANPQFRRLF (93 aa)). Residues 108–127 (GKKEAPKGDGSNKSDSKQDS) show a composition bias toward basic and acidic residues. 375-382 (GPPGTGKT) provides a ligand contact to ATP. His-600 contacts Zn(2+). Residue Glu-601 is part of the active site. Zn(2+)-binding residues include His-604 and Asp-676. The segment at 781–822 (PTNYDLFKQGFQDEEDSKNQEAAKTPQPDDDGTPSLGEVVPT) is disordered.

It in the N-terminal section; belongs to the AAA ATPase family. The protein in the C-terminal section; belongs to the peptidase M41 family. Requires Zn(2+) as cofactor.

It localises to the mitochondrion. Its function is as follows. Probable ATP-dependent zinc metallopeptidase. This Oryza sativa subsp. japonica (Rice) protein is ATP-dependent zinc metalloprotease FTSH 8, mitochondrial (FTSH8).